The sequence spans 924 residues: Probable dipeptidyl-aminopeptidase B (924 aa).

The span at 1–12 (MPSTYSDDNTLR) shows a compositional bias: polar residues. Residues 1–102 (MPSTYSDDNT…RSNQRSSADG (102 aa)) form a disordered region. Over 1–111 (MPSTYSDDNT…GQRMDRSLRR (111 aa)) the chain is Cytoplasmic. The segment covering 14–23 (GLDRFRDHSP) has biased composition (basic and acidic residues). The segment covering 31–43 (SQETDSTVSTTSI) has biased composition (polar residues). Positions 47–58 (RIQERLDTKEFP) are enriched in basic and acidic residues. Residues 87–100 (NASPSSRSNQRSSA) are compositionally biased toward low complexity. Residues 112-132 (WLFIVSGALVATWVIGLIFFV) form a helical; Signal-anchor for type II membrane protein membrane-spanning segment. At 133–924 (SSKAYKPSSS…GMKRRALPTA (792 aa)) the chain is on the vacuolar side. Residues Asn-231 and Asn-364 are each glycosylated (N-linked (GlcNAc...) asparagine). The Charge relay system role is filled by Ser-768. An N-linked (GlcNAc...) asparagine glycan is attached at Asn-827. Catalysis depends on charge relay system residues Asp-845 and His-878.

It belongs to the peptidase S9B family.

The protein resides in the vacuole membrane. The enzyme catalyses Release of an N-terminal dipeptide, Xaa-Yaa-|-Zaa-, from a polypeptide, preferentially when Yaa is Pro, provided Zaa is neither Pro nor hydroxyproline.. Type IV dipeptidyl-peptidase which removes N-terminal dipeptides sequentially from polypeptides having unsubstituted N-termini provided that the penultimate residue is proline. The polypeptide is Probable dipeptidyl-aminopeptidase B (dapB) (Neurospora crassa (strain ATCC 24698 / 74-OR23-1A / CBS 708.71 / DSM 1257 / FGSC 987)).